The chain runs to 302 residues: MSTGMTAQAGVDTFGRVGVAMVTPFDQDGALDVSAGRRLAAHLVDNGVDSLILAGTTGESPTTSLDEKLELFAAVKEEVGGRAKLCAGAGTNNTATSIEAARAFADAGADSLLVVTPYYSKPSQAGVYAHFTAVADAVDLPVCLYDIPGRSGIPIETETLLRLAEVPNIKAVKDAKGDLVAAAPLIQETGLAWYSGDDGLNLPWLALGASGVISVIGHIAPRALADLYVAFDEGDIARAREINAKTLSPLVEAQGRLGGVTLVKAALRLQGIEVGEPRLPVTAADAEEIEALRHDLEKAGVL.

Position 57 (Thr-57) interacts with pyruvate. The Proton donor/acceptor role is filled by Tyr-145. Lys-173 acts as the Schiff-base intermediate with substrate in catalysis. Pyruvate is bound at residue Ile-213.

It belongs to the DapA family. Homotetramer; dimer of dimers.

Its subcellular location is the cytoplasm. The enzyme catalyses L-aspartate 4-semialdehyde + pyruvate = (2S,4S)-4-hydroxy-2,3,4,5-tetrahydrodipicolinate + H2O + H(+). The protein operates within amino-acid biosynthesis; L-lysine biosynthesis via DAP pathway; (S)-tetrahydrodipicolinate from L-aspartate: step 3/4. In terms of biological role, catalyzes the condensation of (S)-aspartate-beta-semialdehyde [(S)-ASA] and pyruvate to 4-hydroxy-tetrahydrodipicolinate (HTPA). This is 4-hydroxy-tetrahydrodipicolinate synthase from Corynebacterium aurimucosum (strain ATCC 700975 / DSM 44827 / CIP 107346 / CN-1) (Corynebacterium nigricans).